A 247-amino-acid polypeptide reads, in one-letter code: ATP synthase subunit a, chloroplastic (247 aa).

5 helical membrane passes run 38 to 58 (QVLITSWVVIAILLGSATLAV), 95 to 115 (VPFIGTMFLFIFVSNWSGALL), 134 to 154 (INTTVALALLTSVAYFYAGLT), 199 to 219 (LVVVVLVSLVPSIVPIPVMFL), and 220 to 240 (GLFTSGIQALIFATLAAAYIG).

This sequence belongs to the ATPase A chain family. In terms of assembly, F-type ATPases have 2 components, CF(1) - the catalytic core - and CF(0) - the membrane proton channel. CF(1) has five subunits: alpha(3), beta(3), gamma(1), delta(1), epsilon(1). CF(0) has four main subunits: a, b, b' and c.

It is found in the plastid. It localises to the chloroplast thylakoid membrane. In terms of biological role, key component of the proton channel; it plays a direct role in the translocation of protons across the membrane. The sequence is that of ATP synthase subunit a, chloroplastic from Vitis vinifera (Grape).